Consider the following 450-residue polypeptide: tRNA modification GTPase MnmE (450 aa).

Arginine 23, glutamate 79, and lysine 118 together coordinate (6S)-5-formyl-5,6,7,8-tetrahydrofolate. Residues 214 to 374 form the TrmE-type G domain; the sequence is GITLILVGKP…LKEHILNKVG (161 aa). K(+) is bound at residue asparagine 224. GTP-binding positions include 224 to 229, 243 to 249, and 268 to 271; these read NAGKSS, TSIAGTT, and DTAG. Residue serine 228 participates in Mg(2+) binding. Residues threonine 243, isoleucine 245, and threonine 248 each contribute to the K(+) site. Threonine 249 serves as a coordination point for Mg(2+). Lysine 450 is a binding site for (6S)-5-formyl-5,6,7,8-tetrahydrofolate.

Belongs to the TRAFAC class TrmE-Era-EngA-EngB-Septin-like GTPase superfamily. TrmE GTPase family. In terms of assembly, homodimer. Heterotetramer of two MnmE and two MnmG subunits. The cofactor is K(+).

The protein resides in the cytoplasm. Exhibits a very high intrinsic GTPase hydrolysis rate. Involved in the addition of a carboxymethylaminomethyl (cmnm) group at the wobble position (U34) of certain tRNAs, forming tRNA-cmnm(5)s(2)U34. The protein is tRNA modification GTPase MnmE of Francisella tularensis subsp. novicida (strain U112).